We begin with the raw amino-acid sequence, 540 residues long: Glucose-6-phosphate isomerase (540 aa).

Glu346 acts as the Proton donor in catalysis. Active-site residues include His377 and Lys505.

This sequence belongs to the GPI family.

The protein localises to the cytoplasm. The catalysed reaction is alpha-D-glucose 6-phosphate = beta-D-fructose 6-phosphate. The protein operates within carbohydrate biosynthesis; gluconeogenesis. It participates in carbohydrate degradation; glycolysis; D-glyceraldehyde 3-phosphate and glycerone phosphate from D-glucose: step 2/4. In terms of biological role, catalyzes the reversible isomerization of glucose-6-phosphate to fructose-6-phosphate. In Francisella tularensis subsp. mediasiatica (strain FSC147), this protein is Glucose-6-phosphate isomerase.